A 518-amino-acid chain; its full sequence is Probable cytosol aminopeptidase (518 aa).

2 residues coordinate Mn(2+): Lys270 and Asp275. Lys282 is an active-site residue. Positions 293, 352, and 354 each coordinate Mn(2+). Arg356 is a catalytic residue. The segment covering 495-507 (SRTTRQPGSTGET) has biased composition (polar residues). The interval 495–518 (SRTTRQPGSTGETGSRKNRRKSKE) is disordered.

It belongs to the peptidase M17 family. Mn(2+) is required as a cofactor.

The protein resides in the cytoplasm. The catalysed reaction is Release of an N-terminal amino acid, Xaa-|-Yaa-, in which Xaa is preferably Leu, but may be other amino acids including Pro although not Arg or Lys, and Yaa may be Pro. Amino acid amides and methyl esters are also readily hydrolyzed, but rates on arylamides are exceedingly low.. It carries out the reaction Release of an N-terminal amino acid, preferentially leucine, but not glutamic or aspartic acids.. Presumably involved in the processing and regular turnover of intracellular proteins. Catalyzes the removal of unsubstituted N-terminal amino acids from various peptides. In Nitrosospira multiformis (strain ATCC 25196 / NCIMB 11849 / C 71), this protein is Probable cytosol aminopeptidase.